Here is a 414-residue protein sequence, read N- to C-terminus: Histidine--tRNA ligase (414 aa).

The protein belongs to the class-II aminoacyl-tRNA synthetase family. As to quaternary structure, homodimer.

Its subcellular location is the cytoplasm. The enzyme catalyses tRNA(His) + L-histidine + ATP = L-histidyl-tRNA(His) + AMP + diphosphate + H(+). The chain is Histidine--tRNA ligase from Mycoplasma mycoides subsp. mycoides SC (strain CCUG 32753 / NCTC 10114 / PG1).